The sequence spans 305 residues: FMRFamide-related peptides type HF-4 (305 aa).

An N-terminal signal peptide occupies residues 1 to 19 (MTSLCLTIAPAVLSLICLS). Residues Phe36, Phe47, and Phe66 each carry the phenylalanine amide modification. Ile75 is modified (isoleucine amide). Phe84 and Phe93 each carry phenylalanine amide. At Ile102 the chain carries Isoleucine amide. 7 positions are modified to phenylalanine amide: Phe111, Phe120, Phe129, Phe138, Phe147, Phe156, and Phe165. A propeptide spanning residues 168–305 (SVDGEIEAGV…EHKQEYMRFG (138 aa)) is cleaved from the precursor.

Belongs to the FARP (FMRFamide related peptide) family. In terms of tissue distribution, central nervous system.

The protein localises to the secreted. Can function as both cardioregulatory hormones and transmitters and may regulate cardiovascular function. This is FMRFamide-related peptides type HF-4 from Cornu aspersum (Brown garden snail).